We begin with the raw amino-acid sequence, 248 residues long: L-seryl-tRNA(Sec) kinase (248 aa).

7-14 contacts ATP; it reads GLPGVGKS.

This sequence belongs to the L-seryl-tRNA(Sec) kinase family.

It carries out the reaction L-seryl-tRNA(Sec) + ATP = O-phospho-L-seryl-tRNA(Sec) + ADP. Its pathway is aminoacyl-tRNA biosynthesis; selenocysteinyl-tRNA(Sec) biosynthesis; selenocysteinyl-tRNA(Sec) from L-seryl-tRNA(Sec) (archaeal/eukaryal route): step 1/2. Functionally, specifically phosphorylates seryl-tRNA(Sec) to O-phosphoseryl-tRNA(Sec), an activated intermediate for selenocysteine biosynthesis. The chain is L-seryl-tRNA(Sec) kinase (pstK) from Methanocaldococcus jannaschii (strain ATCC 43067 / DSM 2661 / JAL-1 / JCM 10045 / NBRC 100440) (Methanococcus jannaschii).